We begin with the raw amino-acid sequence, 306 residues long: Non-specific ribonucleoside hydrolase RihC (306 aa).

H235 is a catalytic residue.

Belongs to the IUNH family. RihC subfamily.

Hydrolyzes both purine and pyrimidine ribonucleosides with a broad-substrate specificity. The polypeptide is Non-specific ribonucleoside hydrolase RihC (Salmonella dublin (strain CT_02021853)).